Consider the following 431-residue polypeptide: STE20-related kinase adapter protein alpha (431 aa).

S2 and S46 each carry phosphoserine. Residues 69-379 form the Protein kinase domain; the sequence is YELLTVIGKG…ASTLLNHSFF (311 aa). A disordered region spans residues 310–347; the sequence is LTMSPSRSVANSGLSDSLTTSTPRPSNGDSPSHPYHRT. The segment covering 312–339 has biased composition (polar residues); it reads MSPSRSVANSGLSDSLTTSTPRPSNGDS. A phosphothreonine; by LKB1 mark is found at T329 and T401. Residue T419 is modified to Phosphothreonine.

It belongs to the protein kinase superfamily. STE Ser/Thr protein kinase family. STE20 subfamily. As to quaternary structure, component of a trimeric complex composed of STK11/LKB1, STRAD (STRADA or STRADB) and CAB39/MO25 (CAB39/MO25alpha or CAB39L/MO25beta): the complex tethers STK11/LKB1 in the cytoplasm and stimulates its catalytic activity.

Its subcellular location is the nucleus. The protein localises to the cytoplasm. In terms of biological role, pseudokinase which, in complex with CAB39/MO25 (CAB39/MO25alpha or CAB39L/MO25beta), binds to and activates STK11/LKB1. Adopts a closed conformation typical of active protein kinases and binds STK11/LKB1 as a pseudosubstrate, promoting conformational change of STK11/LKB1 in an active conformation. The protein is STE20-related kinase adapter protein alpha (STRADA) of Pongo abelii (Sumatran orangutan).